A 230-amino-acid polypeptide reads, in one-letter code: Orotidine 5'-phosphate decarboxylase (230 aa).

Substrate is bound by residues Asp-11, Lys-34, 61–70, Thr-117, Arg-179, Gln-188, Gly-208, and Arg-209; that span reads DLKLHDIPNT. Lys-63 serves as the catalytic Proton donor.

Belongs to the OMP decarboxylase family. Type 1 subfamily. Homodimer.

It catalyses the reaction orotidine 5'-phosphate + H(+) = UMP + CO2. It participates in pyrimidine metabolism; UMP biosynthesis via de novo pathway; UMP from orotate: step 2/2. Catalyzes the decarboxylation of orotidine 5'-monophosphate (OMP) to uridine 5'-monophosphate (UMP). This Streptococcus uberis (strain ATCC BAA-854 / 0140J) protein is Orotidine 5'-phosphate decarboxylase.